The primary structure comprises 417 residues: Phosphoglycerate kinase 1 (417 aa).

Ser-2 carries the N-acetylserine modification. Phosphoserine is present on residues Ser-2 and Ser-4. Residue Lys-6 is modified to N6-succinyllysine. The residue at position 11 (Lys-11) is an N6-acetyllysine. Positions 23, 24, 25, 26, 38, and 39 each coordinate (2R)-3-phosphoglycerate. A mitochondrial targeting region exposed following cis-trans isomerization by PIN1 and recognized by the TOM complex for mitochondrial translocation of the protein region spans residues 38-43; it reads QRIKAA. Lys-48 carries the N6-acetyllysine; alternate modification. The residue at position 48 (Lys-48) is an N6-succinyllysine; alternate. The (2R)-3-phosphoglycerate site is built by Ser-62, His-63, Gly-65, and Arg-66. Residue Lys-75 is modified to N6-acetyllysine. Position 76 is a phosphotyrosine (Tyr-76). N6-acetyllysine is present on residues Lys-86 and Lys-91. Lys-97 carries the post-translational modification N6-acetyllysine; alternate. Lys-97 is modified (N6-(2-hydroxyisobutyryl)lysine; alternate). Residues Leu-122 and Arg-123 each contribute to the (2R)-3-phosphoglycerate site. Lys-131 is modified (N6-acetyllysine; alternate). An N6-malonyllysine; alternate modification is found at Lys-131. Lys-146 is subject to N6-acetyllysine. 2 residues coordinate (2R)-3-phosphoglycerate: His-170 and Arg-171. Lys-191 bears the N6-succinyllysine mark. Residue Tyr-196 is modified to Phosphotyrosine. N6-acetyllysine is present on Lys-199. Position 203 is a phosphoserine (Ser-203). An ADP-binding site is contributed by Gly-214. Residue Gly-214 participates in CDP binding. Positions 215 and 216 each coordinate AMP. Ala-215 is an ATP binding site. Ala-215 contacts Mg(2+). The residue at position 216 (Lys-216) is an N6-(2-hydroxyisobutyryl)lysine. Mg(2+)-binding residues include Ala-218 and Asp-219. CDP is bound at residue Asp-219. An AMP-binding site is contributed by Lys-220. Position 220 (Lys-220) interacts with ATP. Lys-220 carries the post-translational modification N6-(2-hydroxyisobutyryl)lysine. Gly-238 is a binding site for ADP. Gly-238 lines the CDP pocket. Gly-239 lines the AMP pocket. Gly-239 is an ATP binding site. 2 positions are modified to N6-acetyllysine: Lys-267 and Lys-291. Position 313 (Gly-313) interacts with AMP. Position 313 (Gly-313) interacts with ATP. The residue at position 323 (Lys-323) is an N6-(2-hydroxyisobutyryl)lysine. CDP contacts are provided by Gly-338, Val-340, and Phe-343. Residue Phe-343 coordinates ADP. Residue Glu-344 coordinates AMP. Glu-344 lines the ATP pocket. Lys-361 is modified (N6-acetyllysine). ATP is bound by residues Asp-375 and Thr-376. Asp-375 contributes to the Mg(2+) binding site.

Belongs to the phosphoglycerate kinase family. In terms of assembly, monomer. Interacts with kinase MAPK1/ERK2; the interaction is direct, occurs under hypoxic conditions, and promotes its interaction with PIN1. Interacts with peptidyl-prolyl cis-trans isomerase PIN1; the interaction is direct, occurs under hypoxic conditions, and targets the protein to the mitochondrion by promoting interactions with the TOM complex. Interacts with mitochondrial circRNA mcPGK1 (via its 2nd stem-loop); the interaction is direct and targets the protein to the mitochondrion by promoting interactions with the TOM complex. Interacts with pyruvate dehydrogenase kinase PDK1; the interaction is direct, occurs under hypoxic conditions and leads to PDK1-mediated inhibition of pyruvate dehydrogenase complex activity. Requires Mg(2+) as cofactor. Phosphorylated at Ser-203 by MAPK1/ERK2 under hypoxic conditions, which promotes its mitochondrial targeting.

It localises to the cytoplasm. The protein localises to the cytosol. The protein resides in the mitochondrion matrix. The enzyme catalyses (2R)-3-phosphoglycerate + ATP = (2R)-3-phospho-glyceroyl phosphate + ADP. It carries out the reaction L-seryl-[protein] + ATP = O-phospho-L-seryl-[protein] + ADP + H(+). The protein operates within carbohydrate degradation; glycolysis; pyruvate from D-glyceraldehyde 3-phosphate: step 2/5. Catalyzes one of the two ATP producing reactions in the glycolytic pathway via the reversible conversion of 1,3-diphosphoglycerate to 3-phosphoglycerate. Both L- and D- forms of purine and pyrimidine nucleotides can be used as substrates, but the activity is much lower on pyrimidines. In addition to its role as a glycolytic enzyme, it seems that PGK-1 acts as a polymerase alpha cofactor protein (primer recognition protein). Acts as a protein kinase when localized to the mitochondrion where it phosphorylates pyruvate dehydrogenase kinase PDK1 to inhibit pyruvate dehydrogenase complex activity and suppress the formation of acetyl-coenzyme A from pyruvate, and consequently inhibit oxidative phosphorylation and promote glycolysis. May play a role in sperm motility. This is Phosphoglycerate kinase 1 (PGK1) from Macaca fascicularis (Crab-eating macaque).